The chain runs to 230 residues: Large ribosomal subunit protein uL1 (230 aa).

It belongs to the universal ribosomal protein uL1 family. In terms of assembly, part of the 50S ribosomal subunit.

Functionally, binds directly to 23S rRNA. The L1 stalk is quite mobile in the ribosome, and is involved in E site tRNA release. Its function is as follows. Protein L1 is also a translational repressor protein, it controls the translation of the L11 operon by binding to its mRNA. This is Large ribosomal subunit protein uL1 from Rubrobacter xylanophilus (strain DSM 9941 / JCM 11954 / NBRC 16129 / PRD-1).